A 37-amino-acid chain; its full sequence is Antifungal protein S (37 aa).

Belongs to the thaumatin family.

Has antifungal activity. Inhibits the growth of Trichoderma viridae and Candida albicans. The polypeptide is Antifungal protein S (Hordeum vulgare (Barley)).